A 784-amino-acid polypeptide reads, in one-letter code: Cadherin-5 (784 aa).

Residues 1–25 (MQRLMMLLATSGACLGLLAVAAVAA) form the signal peptide. Residues 26-47 (AGANPAQRDTHSLLPTHRRQKR) constitute a propeptide that is removed on maturation. 5 consecutive Cadherin domains span residues 48 to 151 (DWIW…WPVF), 152 to 258 (THRL…FPFF), 259 to 372 (TQTK…PPIF), 373 to 477 (QQPF…DNAP), and 478 to 593 (EFAK…MAAQ). At 48–599 (DWIWNQMHID…MAAQVGVSIQ (552 aa)) the chain is on the extracellular side. Positions 58 and 59 each coordinate Ca(2+). The N-linked (GlcNAc...) (complex) asparagine glycan is linked to Asn-61. Ca(2+) contacts are provided by Asp-109 and Glu-111. A glycan (N-linked (GlcNAc...) (complex) asparagine) is linked at Asn-112. Residues Asp-143, Val-144, Asn-145, Asp-146, and Asn-147 each coordinate Ca(2+). Asn-157 carries N-linked (GlcNAc...) asparagine glycosylation. 4 residues coordinate Ca(2+): Asp-177, Asp-179, His-186, and Asp-231. A glycan (N-linked (GlcNAc...) asparagine) is linked at Asn-362. N-linked (GlcNAc...) (complex) asparagine glycosylation occurs at Asn-442. N-linked (GlcNAc...) asparagine glycosylation is found at Asn-523 and Asn-535. The helical transmembrane segment at 600–620 (AVVAILLCILTITVITLLIFL) threads the bilayer. Residues 621-660 (RRRLRKQARAHGKSVPEIHEQLVTYDEEGGGEMDTTSYDV) form a required for interaction with PALS1 region. At 621–784 (RRRLRKQARA…GSDPREELLY (164 aa)) the chain is on the cytoplasmic side.

Part of a complex composed of AMOTL2, MAGI1 and CDH5, within the complex AMOTL2 acts as a scaffold protein for the interaction of MAGI1 with CDH5. The complex is required for coupling actin fibers to cell junctions in endothelial cells. Within the complex AMOTL2 (via its N-terminus) interacts with CDH5. Interacts (via cadherin 5 domain) with PTPRB. Interacts with TRPC4. Interacts with KRIT1. Interacts with PARD3. Interacts with RTN4 (isoform B). Interacts with PALS1; the interaction promotes PALS1 localization to cell junctions and is required for CDH5-mediated vascular lumen formation and endothelial cell. Interacts with CTNND1/p120-catenin; the interaction controls CADH5 endocytosis. In terms of processing, phosphorylated on tyrosine residues by KDR/VEGFR-2. Dephosphorylated by PTPRB. Post-translationally, O-glycosylated. In terms of tissue distribution, expressed in endothelial cells (at protein level). Expressed in the brain.

It is found in the cell junction. It localises to the adherens junction. Its subcellular location is the cell membrane. The protein resides in the cytoplasm. Cadherins are calcium-dependent cell adhesion proteins. They preferentially interact with themselves in a homophilic manner in connecting cells; cadherins may thus contribute to the sorting of heterogeneous cell types. This cadherin may play a important role in endothelial cell biology through control of the cohesion and organization of the intercellular junctions. It associates with alpha-catenin forming a link to the cytoskeleton. Plays a role in coupling actin fibers to cell junctions in endothelial cells, via acting as a cell junctional complex anchor for AMOTL2 and MAGI1. Acts in concert with KRIT1 and PALS1 to establish and maintain correct endothelial cell polarity and vascular lumen. These effects are mediated by recruitment and activation of the Par polarity complex and RAP1B. Required for activation of PRKCZ and for the localization of phosphorylated PRKCZ, PARD3, TIAM1 and RAP1B to the cell junction. Associates with CTNND1/p120-catenin to control CADH5 endocytosis. The polypeptide is Cadherin-5 (Homo sapiens (Human)).